The chain runs to 1127 residues: Nck-associated protein 1-like (1127 aa).

The segment at 638–670 (KAKNKKTRKQRQTPRKGEPERDKPGAESHRKNR) is disordered. Positions 639–651 (AKNKKTRKQRQTP) are enriched in basic residues. Over residues 652 to 666 (RKGEPERDKPGAESH) the composition is skewed to basic and acidic residues. The chain crosses the membrane as a helical span at residues 996-1016 (VACLLLIFLAVSLPLLATDPS).

Belongs to the HEM-1/HEM-2 family. As to quaternary structure, in hematopoietic cells, component of the WAVE2 complex composed of ABI1, CYFIP1/SRA1, NCKAP1L/HEM1 and WASF2/WAVE2. Interacts with ARHGAP4, PIK3C3/VPS34 and PPP1R12A/MYPT1. Interacts with mammalian target of rapamycin complex 2 (mTORC2) components, including MTOR and RICTOR. Expressed only in cells of hematopoietic origin. Expressed in neutrophils (at protein level). Expressed in T-cells (at protein level).

It localises to the cell membrane. The protein resides in the cytoplasm. In terms of biological role, essential hematopoietic-specific regulator of the actin cytoskeleton. Controls lymphocyte development, activation, proliferation and homeostasis, erythrocyte membrane stability, as well as phagocytosis and migration by neutrophils and macrophages. Component of the WAVE2 complex which signals downstream of RAC to stimulate F-actin polymerization. Required for stabilization and/or translation of the WAVE2 complex proteins in hematopoietic cells. Within the WAVE2 complex, enables the cortical actin network to restrain excessive degranulation and granule release by T-cells. Required for efficient T-lymphocyte and neutrophil migration. Exhibits complex cycles of activation and inhibition to generate waves of propagating the assembly with actin. Also involved in mechanisms WAVE-independent to regulate myosin and actin polymerization during neutrophil chemotaxis. In T-cells, required for proper mechanistic target of rapamycin complex 2 (mTORC2)-dependent AKT phosphorylation, cell proliferation and cytokine secretion, including that of IL2 and TNF. The protein is Nck-associated protein 1-like of Homo sapiens (Human).